The chain runs to 639 residues: MINITLKDGKVIEVEKGVKVSDIVMKISPALYKKAVGAKINGEIAELMTEIKEDSELEILTFDDEEGRKTVRHTSSHILAQAVKRLYPEAKLAIGPAIDNGFYYDFDIDFTFTPEMLEKIEKEMAKIVKENLEIERFELPREEAIKLVKDASEPYKVELIEDLPEGEVISFYKQGDFVDLCAGPHLPSTGKIKAIKLLSVAGAYWRGDEKNKMLQRIYGTAFLKKSELEAYLKMLEEAKRRDHRKLGKELDLFTINEEGPGFPFFHPKGMVVRNILENFWREKHTKAGYDEIRTPVILNEELWHRSGHWDHYKENMYFTKIDNENFAIKPMNCPGSILVYKSHLHSYKEFPMRLGELGLVHRHELSGALHGLMRVRCFTQDDAHIFMTKEQIKDEILNVIKLIDSFYKVFGFEYFVELSTRPEDSMGSDEDWEVATNGLKNALEGAGLEYKINEGDGAFYGPKIDFHLKDCIGRTWQCGTIQLDFQMPERFDLTYVGQDGEKHRPVMVHRVVFGSIERFIGILIEHFAGAFPTWLAPVQVKVMTITDSQKDYANKVVNDLKEKGIRVEFDDRNEKIGYKIREAQLQKVPYMIILGDKEVSENKVAVRSRKEGDLGAISLKEFVAKLNYEIDNRIVENSK.

Residues 1 to 61 enclose the TGS domain; it reads MINITLKDGK…KEDSELEILT (61 aa). Residues 242–532 are catalytic; the sequence is DHRKLGKELD…LIEHFAGAFP (291 aa). Zn(2+) contacts are provided by Cys-333, His-384, and His-509.

Belongs to the class-II aminoacyl-tRNA synthetase family. As to quaternary structure, homodimer. The cofactor is Zn(2+).

It is found in the cytoplasm. It catalyses the reaction tRNA(Thr) + L-threonine + ATP = L-threonyl-tRNA(Thr) + AMP + diphosphate + H(+). Catalyzes the attachment of threonine to tRNA(Thr) in a two-step reaction: L-threonine is first activated by ATP to form Thr-AMP and then transferred to the acceptor end of tRNA(Thr). Also edits incorrectly charged L-seryl-tRNA(Thr). The polypeptide is Threonine--tRNA ligase (Clostridium tetani (strain Massachusetts / E88)).